The chain runs to 481 residues: Proline--tRNA ligase (481 aa).

The protein belongs to the class-II aminoacyl-tRNA synthetase family. ProS type 3 subfamily. Homodimer.

The protein resides in the cytoplasm. It carries out the reaction tRNA(Pro) + L-proline + ATP = L-prolyl-tRNA(Pro) + AMP + diphosphate. Functionally, catalyzes the attachment of proline to tRNA(Pro) in a two-step reaction: proline is first activated by ATP to form Pro-AMP and then transferred to the acceptor end of tRNA(Pro). The chain is Proline--tRNA ligase from Saccharolobus islandicus (strain M.16.27) (Sulfolobus islandicus).